The following is an 885-amino-acid chain: Leucine--tRNA ligase (885 aa).

Residues 46-56 (PYPSGALHMGH) carry the 'HIGH' region motif. Residues 638–642 (KMSKS) carry the 'KMSKS' region motif. Lys641 is a binding site for ATP.

Belongs to the class-I aminoacyl-tRNA synthetase family.

The protein resides in the cytoplasm. The catalysed reaction is tRNA(Leu) + L-leucine + ATP = L-leucyl-tRNA(Leu) + AMP + diphosphate. In Xanthomonas campestris pv. campestris (strain B100), this protein is Leucine--tRNA ligase.